The sequence spans 257 residues: uncharacterized protein (257 aa).

The chain crosses the membrane as a helical span at residues 7-27; sequence LFLCVSFLLITIFIGGGGFMN.

This sequence belongs to the staphylococcal tandem lipoprotein family.

The protein resides in the cell membrane. This is an uncharacterized protein from Staphylococcus epidermidis (strain ATCC 12228 / FDA PCI 1200).